A 760-amino-acid polypeptide reads, in one-letter code: Acetyl-CoA decarbonylase/synthase complex subunit alpha 1 (760 aa).

Cys56, Cys59, Cys60, Cys62, Cys67, and Cys77 together coordinate [4Fe-4S] cluster. His100 contacts CO. Positions 231, 259, and 298 each coordinate [Ni-4Fe-4S] cluster. 2 consecutive 4Fe-4S ferredoxin-type domains span residues 381–410 and 418–450; these read KKLQ…VEAM and FEGL…MIED. Residues Cys390, Cys393, Cys396, Cys400, Cys428, Cys431, Cys434, and Cys438 each coordinate [4Fe-4S] cluster. 3 residues coordinate [Ni-4Fe-4S] cluster: Cys496, Cys525, and Cys560.

Belongs to the Ni-containing carbon monoxide dehydrogenase family. In terms of assembly, heterotetramer of two alpha and two epsilon subunits. The ACDS complex is made up of alpha, epsilon, beta, gamma and delta subunits with a probable stoichiometry of (alpha(2)epsilon(2))(4)-beta(8)-(gamma(1)delta(1))(8). [4Fe-4S] cluster serves as cofactor. Requires [Ni-4Fe-4S] cluster as cofactor.

It carries out the reaction CO + 2 oxidized [2Fe-2S]-[ferredoxin] + H2O = 2 reduced [2Fe-2S]-[ferredoxin] + CO2 + 2 H(+). Its function is as follows. Part of the ACDS complex that catalyzes the reversible cleavage of acetyl-CoA, allowing autotrophic growth from CO(2). The alpha-epsilon subcomponent functions as a carbon monoxide dehydrogenase. The sequence is that of Acetyl-CoA decarbonylase/synthase complex subunit alpha 1 from Methanopyrus kandleri (strain AV19 / DSM 6324 / JCM 9639 / NBRC 100938).